A 794-amino-acid chain; its full sequence is uncharacterized protein (794 aa).

An N-terminal signal peptide occupies residues 1-22 (MKLKYGTIIFSGLLGVSAILAA). Residue Cys-23 is the site of N-palmitoyl cysteine attachment. Cys-23 is lipidated: S-diacylglycerol cysteine. The segment covering 177 to 196 (SSGKTQVSQTSSGSNQQKTL) has biased composition (polar residues). 3 disordered regions span residues 177 to 208 (SSGK…SDSS), 220 to 257 (AKNN…DKKI), and 466 to 506 (KSTD…ENNS). The segment covering 220-231 (AKNNGKKANNSK) has biased composition (low complexity). A compositionally biased stretch (polar residues) spans 238–250 (DQSTQTHNDQGDA).

This sequence belongs to the MG185/MG260 family.

It localises to the cell membrane. This is an uncharacterized protein from Mycoplasma pneumoniae (strain ATCC 29342 / M129 / Subtype 1) (Mycoplasmoides pneumoniae).